Consider the following 156-residue polypeptide: Small ribosomal subunit protein uS7 (156 aa).

Belongs to the universal ribosomal protein uS7 family. As to quaternary structure, part of the 30S ribosomal subunit. Contacts proteins S9 and S11.

Its function is as follows. One of the primary rRNA binding proteins, it binds directly to 16S rRNA where it nucleates assembly of the head domain of the 30S subunit. Is located at the subunit interface close to the decoding center, probably blocks exit of the E-site tRNA. The chain is Small ribosomal subunit protein uS7 from Actinobacillus succinogenes (strain ATCC 55618 / DSM 22257 / CCUG 43843 / 130Z).